The following is a 122-amino-acid chain: Large ribosomal subunit protein uL14 (122 aa).

The protein belongs to the universal ribosomal protein uL14 family. Part of the 50S ribosomal subunit. Forms a cluster with proteins L3 and L19. In the 70S ribosome, L14 and L19 interact and together make contacts with the 16S rRNA in bridges B5 and B8.

Its function is as follows. Binds to 23S rRNA. Forms part of two intersubunit bridges in the 70S ribosome. This is Large ribosomal subunit protein uL14 from Solidesulfovibrio magneticus (strain ATCC 700980 / DSM 13731 / RS-1) (Desulfovibrio magneticus).